The chain runs to 622 residues: Iron transport multicopper oxidase fio1 (622 aa).

Residues 1–22 (MNKFFSFPILGLLLTCVRFVVA) form the signal peptide. Topologically, residues 23–553 (KERLFEWNVT…GEMPAGWTSK (531 aa)) are extracellular. Residues N30 and N79 are each glycosylated (N-linked (GlcNAc...) asparagine). 2 consecutive Plastocyanin-like domains span residues 49–147 (IGVN…FIIN) and 194–304 (TGLF…LSYN). Residues H85 and H87 each contribute to the Cu cation site. N117 and N123 each carry an N-linked (GlcNAc...) asparagine glycan. H129 and H131 together coordinate Cu cation. N198, N202, N234, N269, N296, N338, N360, and N376 each carry an N-linked (GlcNAc...) asparagine glycan. In terms of domain architecture, Plastocyanin-like 3 spans 386–498 (EPVTYGPYTN…SGLLATFIEA (113 aa)). Residues H417, H420, H422, H480, C481, H482, and H486 each contribute to the Cu cation site. N-linked (GlcNAc...) asparagine glycosylation occurs at N532. Residues 554–574 (AIGTMAACVISACIGMGSIIF) traverse the membrane as a helical segment. The Cytoplasmic segment spans residues 575–622 (YGASIHPVPTEELDENDDLQEAALENAAMFLDTDKAVEKVVEGKDEIK).

The protein belongs to the multicopper oxidase family. Cu cation is required as a cofactor.

Its subcellular location is the cell membrane. Could be an iron transport multicopper oxidase, which is required for Fe(2+) high affinity uptake. May be required to oxidize Fe(2+) and release it from the transporter. Essential component of copper-dependent iron transport. The polypeptide is Iron transport multicopper oxidase fio1 (fio1) (Schizosaccharomyces pombe (strain 972 / ATCC 24843) (Fission yeast)).